Here is a 513-residue protein sequence, read N- to C-terminus: Xylose import ATP-binding protein XylG (513 aa).

2 ABC transporter domains span residues 5-242 (LEMK…VGRE) and 259-505 (LRIE…LRSE). Position 37–44 (37–44 (GENGSGKS)) interacts with ATP.

Belongs to the ABC transporter superfamily. Xylose importer (TC 3.A.1.2.4) family. The complex is composed of two ATP-binding proteins (XylG), two transmembrane proteins (XylH) and a solute-binding protein (XylF).

It is found in the cell inner membrane. The catalysed reaction is D-xylose(out) + ATP + H2O = D-xylose(in) + ADP + phosphate + H(+). Functionally, part of the ABC transporter complex XylFGH involved in xylose import. Responsible for energy coupling to the transport system. This is Xylose import ATP-binding protein XylG from Escherichia coli O6:K15:H31 (strain 536 / UPEC).